The chain runs to 350 residues: MHNRSAAILLRPAAALYGMVMSLRNCLYDQGIFKSWHSPIPVVSVGNITTGGTGKTPLVDWIVKFYEASGIATAIVSRGYGRRTKGVQLVSDGGRLLLGSRDAGDETAMLAARNPRTIVVVAEKRVEGVQFLMHQFADRLPGVIVLDDAFQHRKIARDLDIVVVNAGAPEEIDAMLPAGRLREPLRGLRRAHLIILGKITDDANSATLLQTLRETGKPVIRSKIKPGKLIHVDGSENETNESVKTLAFAGIGAPEGFLHSLKTAGIKIAATKFFRDHEPYTESAIRSIIGEAKRQGLVPVTTEKDWFRIADEPELAEMLRQVGCRYLTITPEFPDGTQELERQLLDVLKR.

ATP is bound at residue 49 to 56 (TTGGTGKT).

This sequence belongs to the LpxK family.

The enzyme catalyses a lipid A disaccharide + ATP = a lipid IVA + ADP + H(+). It participates in glycolipid biosynthesis; lipid IV(A) biosynthesis; lipid IV(A) from (3R)-3-hydroxytetradecanoyl-[acyl-carrier-protein] and UDP-N-acetyl-alpha-D-glucosamine: step 6/6. In terms of biological role, transfers the gamma-phosphate of ATP to the 4'-position of a tetraacyldisaccharide 1-phosphate intermediate (termed DS-1-P) to form tetraacyldisaccharide 1,4'-bis-phosphate (lipid IVA). The chain is Tetraacyldisaccharide 4'-kinase from Chlorobaculum tepidum (strain ATCC 49652 / DSM 12025 / NBRC 103806 / TLS) (Chlorobium tepidum).